The chain runs to 346 residues: Histone PARylation factor 1 (346 aa).

Met-1 bears the N-acetylmethionine mark. A disordered region spans residues 1–23; that stretch reads MVGGGGKRRPGGEGPQCEKTTDV. Lys-19 carries the N6-acetyllysine modification. Ser-97 carries the ADP-ribosylserine modification. N6-acetyllysine occurs at positions 186 and 233. The residue at position 235 (Asp-235) is a PolyADP-ribosyl aspartic acid. Tyr-238 bears the ADP-ribosyltyrosine mark. Glu-240 carries the post-translational modification PolyADP-ribosyl glutamic acid. Residues 242-346 are interaction with PARP1; sequence PETDADLKRI…SQENIDQLAA (105 aa). The Proton donor role is filled by Glu-284.

Belongs to the HPF1 family. As to quaternary structure, interacts with PARP1 (via the PARP catalytic domain). Interacts with PARP2 (via the PARP catalytic domain). Interacts with core nucleosomes in a PARP1- and PARP2-dependent manner.

It is found in the chromosome. It localises to the nucleus. Cofactor for serine ADP-ribosylation that confers serine specificity on PARP1 and PARP2 and plays a key role in DNA damage response. Initiates the repair of double-strand DNA breaks: recruited to DNA damage sites by PARP1 and PARP2 and switches the amino acid specificity of PARP1 and PARP2 from aspartate or glutamate to serine residues, licensing serine ADP-ribosylation of target proteins. Serine ADP-ribosylation of target proteins, such as histones, promotes decompaction of chromatin and the recruitment of repair factors leading to the reparation of DNA strand breaks. Serine ADP-ribosylation of proteins constitutes the primary form of ADP-ribosylation of proteins in response to DNA damage. HPF1 acts by completing the active site of PARP1 and PARP2: forms a composite active site composed of residues from HPF1 and PARP1 or PARP2. While HPF1 promotes the initiation of serine ADP-ribosylation, it restricts the polymerase activity of PARP1 and PARP2 in order to limit the length of poly-ADP-ribose chains. HPF1 also promotes tyrosine ADP-ribosylation, probably by conferring tyrosine specificity on PARP1. This chain is Histone PARylation factor 1, found in Homo sapiens (Human).